A 414-amino-acid chain; its full sequence is Glutamyl-tRNA reductase (414 aa).

Residues 47–50 (TCNR), S106, 111–113 (EAQ), and Q117 each bind substrate. C48 (nucleophile) is an active-site residue. 185 to 190 (GAGRTG) contacts NADP(+).

Belongs to the glutamyl-tRNA reductase family. Homodimer.

The catalysed reaction is (S)-4-amino-5-oxopentanoate + tRNA(Glu) + NADP(+) = L-glutamyl-tRNA(Glu) + NADPH + H(+). The protein operates within porphyrin-containing compound metabolism; protoporphyrin-IX biosynthesis; 5-aminolevulinate from L-glutamyl-tRNA(Glu): step 1/2. Catalyzes the NADPH-dependent reduction of glutamyl-tRNA(Glu) to glutamate 1-semialdehyde (GSA). The sequence is that of Glutamyl-tRNA reductase from Herpetosiphon aurantiacus (strain ATCC 23779 / DSM 785 / 114-95).